A 109-amino-acid polypeptide reads, in one-letter code: MQHAPTQSQDTPCTRQGCSPFIYARRAGTPLRAARTAKTMQPRETSSCKRKTQYNLGSVTSGAHTITPAHAKLPLAQRYCKFTRVTREQHYPENNWENGLICRTPADTL.

This is an uncharacterized protein from Treponema pallidum (strain Nichols).